The primary structure comprises 876 residues: Beta-glucosidase 1 (876 aa).

Positions 1-17 (MLMIVQLLVFALGLAVA) are cleaved as a signal peptide. N-linked (GlcNAc...) asparagine glycosylation is found at Asn22, Asn75, Asn224, and Asn267. Asp295 is a catalytic residue. 10 N-linked (GlcNAc...) asparagine glycosylation sites follow: Asn332, Asn339, Asn372, Asn389, Asn426, Asn544, Asn585, Asn739, Asn780, and Asn790.

It belongs to the glycosyl hydrolase 3 family.

It catalyses the reaction Hydrolysis of terminal, non-reducing beta-D-glucosyl residues with release of beta-D-glucose.. It participates in glycan metabolism; cellulose degradation. This Saccharomycopsis fibuligera (Yeast) protein is Beta-glucosidase 1 (BGL1).